Consider the following 376-residue polypeptide: Tetraacyldisaccharide 4'-kinase (376 aa).

51–58 (AVGGTGKT) lines the ATP pocket.

Belongs to the LpxK family.

It catalyses the reaction a lipid A disaccharide + ATP = a lipid IVA + ADP + H(+). Its pathway is glycolipid biosynthesis; lipid IV(A) biosynthesis; lipid IV(A) from (3R)-3-hydroxytetradecanoyl-[acyl-carrier-protein] and UDP-N-acetyl-alpha-D-glucosamine: step 6/6. Transfers the gamma-phosphate of ATP to the 4'-position of a tetraacyldisaccharide 1-phosphate intermediate (termed DS-1-P) to form tetraacyldisaccharide 1,4'-bis-phosphate (lipid IVA). The protein is Tetraacyldisaccharide 4'-kinase of Bacteroides fragilis (strain YCH46).